Reading from the N-terminus, the 216-residue chain is Adenylate kinase (216 aa).

Residue 10 to 15 coordinates ATP; that stretch reads GAGKGT. An NMP region spans residues 30-59; sequence STGDMFRAAMKAETEMGLQAKSFIDKGALV. Residues threonine 31, arginine 36, 57 to 59, 85 to 88, and glutamine 92 each bind AMP; these read ALV and GFPR. The interval 126–163 is LID; sequence GRRICKECGATYHLEFNPPAKADVCDKCGGELYQRSDD. Arginine 127 is a binding site for ATP. Residues cysteine 130 and cysteine 133 each contribute to the Zn(2+) site. An ATP-binding site is contributed by 136–137; it reads TY. The Zn(2+) site is built by cysteine 150 and cysteine 153. 2 residues coordinate AMP: arginine 160 and arginine 171. ATP is bound at residue glutamine 199.

It belongs to the adenylate kinase family. In terms of assembly, monomer.

It localises to the cytoplasm. It carries out the reaction AMP + ATP = 2 ADP. It functions in the pathway purine metabolism; AMP biosynthesis via salvage pathway; AMP from ADP: step 1/1. Its function is as follows. Catalyzes the reversible transfer of the terminal phosphate group between ATP and AMP. Plays an important role in cellular energy homeostasis and in adenine nucleotide metabolism. The polypeptide is Adenylate kinase (Bacillus cereus (strain B4264)).